A 787-amino-acid chain; its full sequence is Disease resistance protein ADR1 (787 aa).

The region spanning methionine 1–serine 149 is the RPW8 domain. Positions histidine 96 to asparagine 112 form a coiled coil. ATP is bound at residue glycine 193–threonine 200. One can recognise an NB-ARC domain in the interval histidine 247–valine 414. 4 LRR repeats span residues methionine 549–asparagine 575, leucine 576–leucine 599, isoleucine 650–valine 674, and leucine 722–leucine 745.

This sequence belongs to the disease resistance NB-LRR family.

In terms of biological role, disease resistance (R) protein that mediates resistance against Hyaloperonospora parasitica in a salicylic acid-dependent manner. Also mediates resistance against Erysiphe cichoracearum is both salicylic acid-dependent and partially NPR1-dependent. Resistance proteins guard the plant against pathogens that contain an appropriate avirulence protein via an indirect interaction with this avirulence protein. That triggers a defense system including the hypersensitive response, which restricts the pathogen growth. In Arabidopsis thaliana (Mouse-ear cress), this protein is Disease resistance protein ADR1 (ADR1).